The primary structure comprises 140 residues: Profilin (140 aa).

Ser-2 carries the post-translational modification N-acetylserine.

It belongs to the profilin family. As to quaternary structure, occurs in many kinds of cells as a complex with monomeric actin in a 1:1 ratio.

The protein localises to the cytoplasm. The protein resides in the cytoskeleton. Functionally, binds to actin and affects the structure of the cytoskeleton. At high concentrations, profilin prevents the polymerization of actin, whereas it enhances it at low concentrations. By binding to PIP2, it inhibits the formation of IP3 and DG. The protein is Profilin of Heliocidaris crassispina (Sea urchin).